The chain runs to 255 residues: NAD kinase (255 aa).

D44 serves as the catalytic Proton acceptor. NAD(+) contacts are provided by residues D44–G45, H49, N114–E115, D144, A152, S155–S160, and Q216.

It belongs to the NAD kinase family. A divalent metal cation serves as cofactor.

Its subcellular location is the cytoplasm. The catalysed reaction is NAD(+) + ATP = ADP + NADP(+) + H(+). In terms of biological role, involved in the regulation of the intracellular balance of NAD and NADP, and is a key enzyme in the biosynthesis of NADP. Catalyzes specifically the phosphorylation on 2'-hydroxyl of the adenosine moiety of NAD to yield NADP. The chain is NAD kinase from Rickettsia peacockii (strain Rustic).